We begin with the raw amino-acid sequence, 563 residues long: PTS system fructose-specific EIIB'BC component (563 aa).

PTS EIIB type-2 domains are found at residues 1 to 85 (MKTL…KGHA) and 104 to 201 (KRVV…KAVA). The active-site Phosphocysteine intermediate; for EIIB activity is C112. C112 is subject to Phosphocysteine; by EIIA. Residues 226–561 (AYRHLLTGVS…KRPEVDAVAK (336 aa)) enclose the PTS EIIC type-2 domain. 9 helical membrane passes run 236-256 (YMLP…AFGI), 274-294 (GGSA…FSIA), 304-324 (IGGM…IAGF), 349-369 (ILII…YLIG), 382-402 (WLQT…GGMM), 430-450 (MAAI…ATMV), 463-483 (GKAA…PFAA), 489-509 (VLPC…AIGA), and 518-538 (LFVL…VAII).

The protein resides in the cell inner membrane. It carries out the reaction D-fructose(out) + N(pros)-phospho-L-histidyl-[protein] = D-fructose 1-phosphate(in) + L-histidyl-[protein]. Functionally, the phosphoenolpyruvate-dependent sugar phosphotransferase system (sugar PTS), a major carbohydrate active transport system, catalyzes the phosphorylation of incoming sugar substrates concomitantly with their translocation across the cell membrane. The enzyme II FruAB PTS system is involved in fructose transport. The polypeptide is PTS system fructose-specific EIIB'BC component (Escherichia coli (strain K12)).